The primary structure comprises 1091 residues: ATP-dependent helicase/deoxyribonuclease subunit B (1091 aa).

The protein belongs to the helicase family. AddB/RexB type 2 subfamily. As to quaternary structure, heterodimer of AddA and RexB. Requires Mg(2+) as cofactor.

Functionally, the heterodimer acts as both an ATP-dependent DNA helicase and an ATP-dependent, dual-direction single-stranded exonuclease. Recognizes the chi site generating a DNA molecule suitable for the initiation of homologous recombination. This subunit has 5' -&gt; 3' nuclease activity but not helicase activity. The chain is ATP-dependent helicase/deoxyribonuclease subunit B from Streptococcus pneumoniae (strain Hungary19A-6).